We begin with the raw amino-acid sequence, 588 residues long: NADP-dependent malic enzyme 2 (588 aa).

Residues 1–21 (MGSTPTDLPGEDVADNRSGVG) are disordered. At G2 the chain carries N-acetylglycine. Catalysis depends on Y136, which acts as the Proton donor. R189 serves as a coordination point for NADP(+). K207 functions as the Proton acceptor in the catalytic mechanism. A divalent metal cation is bound by residues E279, D280, and D303. Residues D303, 332–348 (LFLGAGEAGTGIAELIA), and N444 each bind NADP(+).

Belongs to the malic enzymes family. As to quaternary structure, homohexamers and homooctamers. It depends on Mg(2+) as a cofactor. The cofactor is Mn(2+). In terms of tissue distribution, expressed in leaves, stems, flowers and roots. Particularly present in vasculatures, trichome basal cells and hydatodes.

The protein localises to the cytoplasm. The catalysed reaction is (S)-malate + NADP(+) = pyruvate + CO2 + NADPH. The enzyme catalyses oxaloacetate + H(+) = pyruvate + CO2. Its activity is regulated as follows. Activated by coenzyme A (CoA), aspartate, succinate and fumarate. Repressed by oxaloacetate, glucose and ATP. The chain is NADP-dependent malic enzyme 2 (NADP-ME2) from Arabidopsis thaliana (Mouse-ear cress).